An 869-amino-acid chain; its full sequence is TATA box-binding protein-associated factor RNA polymerase I subunit C (869 aa).

2 disordered regions span residues 605–629 (SSLRRDAGPPGDTQPDCHAPTASWT) and 729–869 (GAAW…RMGF). Thr-834 carries the phosphothreonine modification. The segment covering 835–860 (PPHSQASSVRATRSQQHTPVLSSSQP) has biased composition (polar residues). Residue Ser-848 is modified to Phosphoserine.

As to quaternary structure, component of the transcription factor SL1/TIF-IB complex, composed of TBP and at least TAF1A, TAF1B, TAF1C and TAF1D. In the complex interacts directly with TBP, TAF1A and TAF1B. Interaction of the SL1/TIF-IB subunits with TBP excludes interaction of TBP with the transcription factor IID (TFIID) subunits. Interacts with MYC and RRN3. Interacts with p53/TP53; the interaction prevents the association of SL1/TIF-IB with UBTF and represses RNA polymerase I transcription. Part of Pol I pre-initiation complex (PIC), in which Pol I core assembles with RRN3 and promoter-bound UTBF and SL1/TIF-IB complex.

The protein localises to the nucleus. The protein resides in the nucleolus. In terms of biological role, component of the transcription factor SL1/TIF-IB complex, which is involved in the assembly of the PIC (pre-initiation complex) during RNA polymerase I-dependent transcription. The rate of PIC formation probably is primarily dependent on the rate of association of SL1/TIF-IB with the rDNA promoter. SL1/TIF-IB is involved in stabilization of nucleolar transcription factor 1/UBTF on rDNA. Formation of SL1/TIF-IB excludes the association of TBP with TFIID subunits. Recruits RNA polymerase I to the rRNA gene promoter via interaction with RRN3. The protein is TATA box-binding protein-associated factor RNA polymerase I subunit C (TAF1C) of Homo sapiens (Human).